Here is a 321-residue protein sequence, read N- to C-terminus: Olfactory receptor 5K3 (321 aa).

Over 1 to 25 the chain is Extracellular; it reads MNKENHSLIAEFILTGFTYHPKLKT. Asn5 carries an N-linked (GlcNAc...) asparagine glycan. A helical membrane pass occupies residues 26–46; that stretch reads VLFVVFFAIYLITMVGNIGLV. Topologically, residues 47-56 are cytoplasmic; that stretch reads ALIYIEQRLH. Residues 57–77 traverse the membrane as a helical segment; sequence TPMYIFLGNLVLMDSCCSSAI. At 78-97 the chain is on the extracellular side; sequence TPKMLENFFSEDKRITLYEC. Cys97 and Cys179 are oxidised to a cystine. The chain crosses the membrane as a helical span at residues 98-118; the sequence is MAQFYFLCLAETTDCFLLAAM. Topologically, residues 119–143 are cytoplasmic; sequence AYDCYVAICNPLQYHTMMSKTLCIQ. A helical membrane pass occupies residues 144–164; sequence MTAGAYLAGNLHPMIEVEFLL. At 165–196 the chain is on the extracellular side; the sequence is RLTFCGSHQINHFFCDVLPLYRLSCINPYINE. A helical membrane pass occupies residues 197-217; it reads LVLFILAGSIQIFTIVLVSYF. The Cytoplasmic segment spans residues 218 to 235; sequence YILFTIFTMKSKEGRGKA. The chain crosses the membrane as a helical span at residues 236 to 256; sequence LSTCASHFLSVSIFCDSLLFM. Over 257–269 the chain is Extracellular; that stretch reads YARPGAVNEGDKD. Residues 270–290 form a helical membrane-spanning segment; sequence IPVAIFYTLVIPLLNPFIYSL. The Cytoplasmic segment spans residues 291–321; it reads RNKEVINIMKKIMKKRKFCHILKQMSSPLAT.

The protein belongs to the G-protein coupled receptor 1 family.

It is found in the cell membrane. Its function is as follows. Odorant receptor. In Homo sapiens (Human), this protein is Olfactory receptor 5K3 (OR5K3).